A 65-amino-acid chain; its full sequence is Large ribosomal subunit protein bL33c (65 aa).

Belongs to the bacterial ribosomal protein bL33 family.

It is found in the plastid. In Aneura mirabilis (Parasitic liverwort), this protein is Large ribosomal subunit protein bL33c.